The sequence spans 566 residues: Mucolipin-2 (566 aa).

Over 1–65 the chain is Cytoplasmic; sequence MARQPYRFPQ…YRARRQIPWK (65 aa). A helical transmembrane segment spans residues 66 to 86; that stretch reads LGLQILKIVMVTTQLVRFGLS. Over 87–288 the chain is Extracellular; the sequence is NQLVVAFKED…IFGSTQKNAQ (202 aa). The extracellular/lumenal pore loop stretch occupies residues 107-123; that stretch reads KGYSGTDEDDYSCSVYT. 2 cysteine pairs are disulfide-bonded: Cys164-Cys190 and Cys243-Cys274. A helical membrane pass occupies residues 289 to 309; it reads YVLVFDAFVIVICLASLILCT. Topologically, residues 310–346 are cytoplasmic; that stretch reads RSIVLALRLRKRFLNFFLEKYKRPVCDTDQWEFINGW. Residues 347-367 form a helical membrane-spanning segment; it reads YVLVIISDLMTIIGSILKMEI. Topologically, residues 368-376 are extracellular; it reads KAKNLTNYD. The chain crosses the membrane as a helical span at residues 377-397; that stretch reads LCSIFLGTSTLLVWVGVIRYL. Over 398 to 419 the chain is Cytoplasmic; that stretch reads GYFQAYNVLILTMQASLPKVLR. The helical transmembrane segment at 420–440 threads the bilayer; that stretch reads FCACAGMIYLGYTFCGWIVLG. Over 441 to 448 the chain is Extracellular; the sequence is PYHDKFEN. Positions 449 to 469 form an intramembrane region, pore-forming; that stretch reads LNTVAECLFSLVNGDDMFATF. Positions 461–464 match the Selectivity filter motif; it reads NGDD. The Extracellular portion of the chain corresponds to 470 to 480; sequence AQIQQKSILVW. The helical transmembrane segment at 481–502 threads the bilayer; it reads LFSRLYLYSFISLFIYMILSLF. At 503–566 the chain is on the cytoplasmic side; it reads IALITDSYDT…RSDDHLIPIS (64 aa).

It belongs to the transient receptor (TC 1.A.4) family. Polycystin subfamily. MCOLN2 sub-subfamily. Forms homooligomeric complexes; probably tetrameric. Can heterooligomerize with MCOLN1; heteromeric assemblies have different channel properties as compared to the respective homooligomers and may be tissue-specific. Interacts with TMEM176A.

The protein localises to the cell membrane. It localises to the late endosome membrane. Its subcellular location is the lysosome membrane. It is found in the recycling endosome membrane. The enzyme catalyses Ca(2+)(in) = Ca(2+)(out). The catalysed reaction is Fe(2+)(in) = Fe(2+)(out). With respect to regulation, channel activity is reduced by low extracellular/lumenal pH level. Nonselective cation channel probably playing a role in the regulation of membrane trafficking events. Acts as a Ca(2+)-permeable cation channel with inwardly rectifying activity. May activate ARF6 and be involved in the trafficking of GPI-anchored cargo proteins to the cell surface via the ARF6-regulated recycling pathway. May play a role in immune processes. In adaptive immunity, TRPML2 and TRPML1 may play redundant roles in the function of the specialized lysosomes of B cells. In the innate immune response, may play a role in the regulation of chemokine secretion and macrophage migration. Through a possible and probably tissue-specific heteromerization with MCOLN1 may be at least in part involved in many lysosome-dependent cellular events. Also functions as a Fe(2+) permeable channel. This Homo sapiens (Human) protein is Mucolipin-2.